The following is a 317-amino-acid chain: Glycine--tRNA ligase alpha subunit (317 aa).

Belongs to the class-II aminoacyl-tRNA synthetase family. Tetramer of two alpha and two beta subunits.

It localises to the cytoplasm. The enzyme catalyses tRNA(Gly) + glycine + ATP = glycyl-tRNA(Gly) + AMP + diphosphate. The sequence is that of Glycine--tRNA ligase alpha subunit from Leptothrix cholodnii (strain ATCC 51168 / LMG 8142 / SP-6) (Leptothrix discophora (strain SP-6)).